Reading from the N-terminus, the 312-residue chain is Epoxyqueuosine reductase (312 aa).

Asp-132 acts as the Proton donor in catalysis. The 4Fe-4S ferredoxin-type 1 domain occupies 174-206; the sequence is EVLEADKPSKPICGECEKCIEACPTKAIEEPFI. Positions 186, 189, 192, 196, 212, 240, 243, and 247 each coordinate [4Fe-4S] cluster. Residues 226–257 form the 4Fe-4S ferredoxin-type 2 domain; the sequence is PENIINKMGNWIAGCDICQDVCPWNQKHIPST.

Belongs to the QueG family. As to quaternary structure, monomer. Cob(II)alamin is required as a cofactor. The cofactor is [4Fe-4S] cluster.

It localises to the cytoplasm. The enzyme catalyses epoxyqueuosine(34) in tRNA + AH2 = queuosine(34) in tRNA + A + H2O. It participates in tRNA modification; tRNA-queuosine biosynthesis. Its function is as follows. Catalyzes the conversion of epoxyqueuosine (oQ) to queuosine (Q), which is a hypermodified base found in the wobble positions of tRNA(Asp), tRNA(Asn), tRNA(His) and tRNA(Tyr). This is Epoxyqueuosine reductase from Prochlorococcus marinus (strain NATL2A).